The primary structure comprises 1978 residues: MWIPTEHEKYGVVIASFRGTVPYGLSLEIGDTVQILEKCDGWYRGFALKNPNIKGIFPSSYVHLKNACVKNKGQFEMVIPTEDSVITEMTSTLRDWGTMWKQLYVRNEGDLFHRLWHIMNEILDLRRQVLVGHLTHDRMKDVKRHITARLDWGNEQLGLDLVPRKEYAMVDPEDISITELYRLMEHRHRKKDTPVQASSHHLFVQMKSLMCSNLGEELEVIFSLFDSKENRPISERFFLRLNRNGLPKAPDKPERHCSLFVDLGSSELRKDIYITVHIIRIGRMGAGEKKNACSVQYRRPFGCAVLSIADLLTGETKDDLVLKVYMCNTESEWYQIHENIIKKLNARYNLTGSNAGLAVSLQLLHGDIEQIRREYSSVFSHGVSITRKLGFSDIIMPGEMRNDLYITVERGEFEKGGKSVARNVEVTMFIVDSNGQPLKDFISFGSGEPPASEYHSFVLYHNNSPRWSELLKLPIPVDKFRGSHIRFEFRHCSTKEKGEKKLFGFSFVPLMQEDGRTLPDGTHELIVHKCEENTNLQDTTRYLKLPFSKVIFLGNNNQTMKATKESFWITSFLCSTKLTQNGDMLDLLKWRTHPDKITGCLSKLKEIDGSEIVKFLQDTLDTLFGILDENSQKYGSKVFDSLVHIINLLQDSKFHHFKPVMDTYIESHFAGALAYRDLIKVLKWYVDRITEAERQEHIQEVLKAQEYIFKYIVQSRRLFSLATGGQNEEEFRCCIQELLMSVRFFLSQESKGTGALSQSQAVFLSSFPAVYSELLKLFDVREVANLVQDTLGSLPTIMHVDDSLQAIKLQCIGKTVESQLYTNPDSRYILLPVVLHHLHIHLQEQKDLIMCARILSNVFCLIKKNSSEKSVLEEIDVIVASLLDILLRTILEITSRPQASSSAMRLQFQDVTGEFVACLLSLLRQMTDRHYQQLLNSFSTKEELRDFLLQIFTVFRILIRPEMFPKDWTVMRLVANNVIITTVLYLSDALRKNFLNENFDYKIWDSYFYLAVIFINQLCLQLEMFTPSKKKKVLEKYGDMRVTMGCEIFSMWQNLGEHKLHFIPALIGPFLEVTLIPQPDLRNVMIPIFHDMMDWEQRRSGNFKQVEAKLIDKLDSLMSEGKGDETYRELFNSIIPLFGPYPSLLKKIERETWRESGVSLIATVTRLMERLLDYRDCMKIGEVDGKKIGCTVSLLNFYKTELNKEEMYIRYIHKLYDLHLKAQNFTEAAYTLLLYDELLEWSDRPLREFLTYPMQTEWQRKEHLHLTIIQNFDRGKCWENGIILCRKIAEQYESYYDYRNLSKMRMMEASLYDKIMDQQRLEPEFFRVGFYGKKFPFFLRNKEFVCRGHDYERLEAFQQRMLNEFPHAIAMQHANQPDETIFQAEAQYLQIYAVTPIPESQEVLQREGVPDNIKSFYKVNHIWKFRYDRPFHKGAKDKENEFKSLWVERTSLYLVQSLPGISRWFEVEKREVVEMSPLENAIEVLENKNQQLKTLISQCQTRQMQNINPLTMCLNGVIDAAVNGGVSRYQEAFFVKDYILSHPEDGEKIARLRELMLEQAQILEFGLAVHEKFVPQDMRPLHKKLVDQFFVMKSSFGIQEFPACIQASPVHFPNGSPRVCRNSAPASMSPDGTRVIPRRSPLSYPAVNRYSSSSLSSQASAEVSNITGQSESSDEVFNMQPSPSTSSLSSTHSASPNVTSSAPSSARASPLLSDKHKHSRENSCLSPRDRPCSAIYPTPVEPSQRMLFNHIGDGALPRSDPNLSAPEKAVNPTPSSWSLDSGKEAKNMSDSGKLISPPVPPRPTQTASPARHTTSVSPSPAGRSPLKGSVQSFTPSPVEYNSPGLSSNSPVLSGSYSSGISSLSRCSTSETSGFENQANEQSVPVPVPVPVPVPVPSFSGSEEPVRKESKTPPPYSVYERTLRRPVPLPHSLSIPVTSEPPALPPKPLAARSSHLENGTRRTEPGPRPRPLPRKVSQL.

An SH3 domain is found at 6–67 (EHEKYGVVIA…PSSYVHLKNA (62 aa)). Residue Y167 is modified to Phosphotyrosine. T193 carries the phosphothreonine modification. The 174-residue stretch at 401-574 (RNDLYITVER…ESFWITSFLC (174 aa)) folds into the C2 DOCK-type domain. Residues 1199–1605 (KTELNKEEMY…FGIQEFPACI (407 aa)) enclose the DOCKER domain. 6 positions are modified to phosphoserine: S1608, S1616, S1623, S1627, S1629, and S1640. 2 disordered regions span residues 1657–1738 (SQAS…IYPT) and 1751–1978 (IGDG…VSQL). The segment covering 1681-1712 (PSPSTSSLSSTHSASPNVTSSAPSSARASPLL) has biased composition (low complexity). A Phosphoserine modification is found at S1778. Residues 1797 to 1803 (PPVPPRP) carry the SH3-binding motif. Over residues 1804-1818 (TQTASPARHTTSVSP) the composition is skewed to polar residues. Residues 1842–1872 (SPGLSSNSPVLSGSYSSGISSLSRCSTSETS) show a composition bias toward low complexity. Polar residues predominate over residues 1873–1882 (GFENQANEQS). Positions 1885–1895 (VPVPVPVPVPV) are enriched in pro residues. Residues 1953–1966 (SHLENGTRRTEPGP) are compositionally biased toward basic and acidic residues.

It belongs to the DOCK family. Interacts with nucleotide-free Rap1; functions as a guanine nucleotide exchange factor (GEF) for Rap1. Interacts (via DOCKER domain) with RAC1; functions as a guanine nucleotide exchange factor (GEF) for RAC1. Interacts with the SH3 domain of CRK. Interacts with FASLG. Interacts with ELMO2 and EPHA2; mediates activation of RAC1 by EPHA2. Interacts with USH1C (via PDZ 1 domain). In terms of tissue distribution, expressed in inner ear (at protein level).

The protein resides in the cell membrane. Its subcellular location is the cytoplasm. It localises to the cytosol. Functions as a guanine nucleotide exchange factor (GEF) that promotes the exchange of GDP to GTP, converting inactive GDP-bound small GTPases into their active GTP-bound form. Involved in regulation of adherens junction between cells. Plays a role in cell migration. Its function is as follows. Has a higher guanine nucleotide exchange factor activity compared to other isoforms. The sequence is that of Dedicator of cytokinesis protein 4 (Dock4) from Mus musculus (Mouse).